Here is a 352-residue protein sequence, read N- to C-terminus: Chorismate synthase (352 aa).

Arg-48 contacts NADP(+). FMN contacts are provided by residues Arg-125 to Ser-127, Asn-237 to Ala-238, Gly-278, Lys-293 to Ser-297, and Arg-319.

It belongs to the chorismate synthase family. As to quaternary structure, homotetramer. FMNH2 serves as cofactor.

It catalyses the reaction 5-O-(1-carboxyvinyl)-3-phosphoshikimate = chorismate + phosphate. The protein operates within metabolic intermediate biosynthesis; chorismate biosynthesis; chorismate from D-erythrose 4-phosphate and phosphoenolpyruvate: step 7/7. Its function is as follows. Catalyzes the anti-1,4-elimination of the C-3 phosphate and the C-6 proR hydrogen from 5-enolpyruvylshikimate-3-phosphate (EPSP) to yield chorismate, which is the branch point compound that serves as the starting substrate for the three terminal pathways of aromatic amino acid biosynthesis. This reaction introduces a second double bond into the aromatic ring system. In Francisella tularensis subsp. tularensis (strain FSC 198), this protein is Chorismate synthase.